We begin with the raw amino-acid sequence, 490 residues long: Ribulose bisphosphate carboxylase large chain (490 aa).

N127 and T177 together coordinate substrate. The Proton acceptor role is filled by K179. K181 contributes to the substrate binding site. Residues K205, D207, and E208 each contribute to the Mg(2+) site. K205 carries the N6-carboxylysine modification. H297 acts as the Proton acceptor in catalysis. Substrate is bound by residues R298, H330, and S382.

The protein belongs to the RuBisCO large chain family. Type I subfamily. Heterohexadecamer of 8 large chains and 8 small chains. Mg(2+) serves as cofactor.

It is found in the plastid. The protein localises to the chloroplast. It carries out the reaction 2 (2R)-3-phosphoglycerate + 2 H(+) = D-ribulose 1,5-bisphosphate + CO2 + H2O. It catalyses the reaction D-ribulose 1,5-bisphosphate + O2 = 2-phosphoglycolate + (2R)-3-phosphoglycerate + 2 H(+). Functionally, ruBisCO catalyzes two reactions: the carboxylation of D-ribulose 1,5-bisphosphate, the primary event in carbon dioxide fixation, as well as the oxidative fragmentation of the pentose substrate in the photorespiration process. Both reactions occur simultaneously and in competition at the same active site. This chain is Ribulose bisphosphate carboxylase large chain, found in Thalassiosira pseudonana (Marine diatom).